Consider the following 342-residue polypeptide: MKAGIELISHSQASHATYANSMTLAEKGPQRLKRQFKEHSSSKESNVSRWLKIFIRQFDIWFPETIPTMKVRYELLRKNFIKEIFNSRAFIYPFLGFYEVLTNPVYWKHILLFAVCYALIFVTIAGLFYVTLVPLLVTWAILLLGPLGVILVHIQWILQTNVLTAFVCRTLVLTHITNQIFDISLVLQDQDEFLNEVKVLPKPQKPHRKIDEPDAVRNFNTIKGSRIFKIPRLLFRMFFKVSNFTSLTLLSLIPIVGPILANQLMAPKRTFTYLQRYFLLKGFSKKQAKDFQYEHYASFICFGMSAGLLELIPFFTIVTISSNTVGAAKWCTSLLKGERKKE.

The Cytoplasmic segment spans residues 1-109; it reads MKAGIELISH…VLTNPVYWKH (109 aa). Residues 110–130 traverse the membrane as a helical segment; it reads ILLFAVCYALIFVTIAGLFYV. A topological domain (extracellular) is located at residue threonine 131. The helical transmembrane segment at 132 to 152 threads the bilayer; it reads LVPLLVTWAILLLGPLGVILV. Residues 153 to 240 lie on the Cytoplasmic side of the membrane; that stretch reads HIQWILQTNV…PRLLFRMFFK (88 aa). Residues 241–261 form a helical membrane-spanning segment; it reads VSNFTSLTLLSLIPIVGPILA. Topologically, residues 262-299 are extracellular; sequence NQLMAPKRTFTYLQRYFLLKGFSKKQAKDFQYEHYASF. The chain crosses the membrane as a helical span at residues 300–320; sequence ICFGMSAGLLELIPFFTIVTI. Over 321–342 the chain is Cytoplasmic; the sequence is SSNTVGAAKWCTSLLKGERKKE.

It belongs to the LDS family.

It localises to the prospore membrane. It is found in the lipid droplet. Its subcellular location is the spore wall. Functionally, involved in spore wall assembly. May be involved in the modulation of rDNA transcription. This Saccharomyces cerevisiae (strain ATCC 204508 / S288c) (Baker's yeast) protein is Outer spore wall protein RRT8.